The sequence spans 427 residues: 3-phosphoshikimate 1-carboxyvinyltransferase (427 aa).

Lys22, Ser23, and Arg27 together coordinate 3-phosphoshikimate. Lys22 contacts phosphoenolpyruvate. The phosphoenolpyruvate site is built by Gly96 and Arg124. Residues Ser169, Ser170, Gln171, Ser197, Asp313, Asn336, and Lys340 each coordinate 3-phosphoshikimate. Gln171 is a phosphoenolpyruvate binding site. Asp313 (proton acceptor) is an active-site residue. Phosphoenolpyruvate is bound by residues Arg344, Arg386, and Lys411.

Belongs to the EPSP synthase family. As to quaternary structure, monomer.

It localises to the cytoplasm. It catalyses the reaction 3-phosphoshikimate + phosphoenolpyruvate = 5-O-(1-carboxyvinyl)-3-phosphoshikimate + phosphate. It participates in metabolic intermediate biosynthesis; chorismate biosynthesis; chorismate from D-erythrose 4-phosphate and phosphoenolpyruvate: step 6/7. Functionally, catalyzes the transfer of the enolpyruvyl moiety of phosphoenolpyruvate (PEP) to the 5-hydroxyl of shikimate-3-phosphate (S3P) to produce enolpyruvyl shikimate-3-phosphate and inorganic phosphate. This is 3-phosphoshikimate 1-carboxyvinyltransferase from Escherichia coli O9:H4 (strain HS).